Consider the following 419-residue polypeptide: Serine hydroxymethyltransferase (419 aa).

(6S)-5,6,7,8-tetrahydrofolate-binding positions include L121 and 125-127 (GHL). At K229 the chain carries N6-(pyridoxal phosphate)lysine. 354–356 (SPF) contacts (6S)-5,6,7,8-tetrahydrofolate.

This sequence belongs to the SHMT family. Homodimer. Pyridoxal 5'-phosphate is required as a cofactor.

It is found in the cytoplasm. The enzyme catalyses (6R)-5,10-methylene-5,6,7,8-tetrahydrofolate + glycine + H2O = (6S)-5,6,7,8-tetrahydrofolate + L-serine. It participates in one-carbon metabolism; tetrahydrofolate interconversion. The protein operates within amino-acid biosynthesis; glycine biosynthesis; glycine from L-serine: step 1/1. Catalyzes the reversible interconversion of serine and glycine with tetrahydrofolate (THF) serving as the one-carbon carrier. This reaction serves as the major source of one-carbon groups required for the biosynthesis of purines, thymidylate, methionine, and other important biomolecules. Also exhibits THF-independent aldolase activity toward beta-hydroxyamino acids, producing glycine and aldehydes, via a retro-aldol mechanism. This chain is Serine hydroxymethyltransferase, found in Coxiella burnetii (strain CbuK_Q154) (Coxiella burnetii (strain Q154)).